We begin with the raw amino-acid sequence, 71 residues long: UPF0435 protein RBAM_008100 (71 aa).

Belongs to the UPF0435 family.

In Bacillus velezensis (strain DSM 23117 / BGSC 10A6 / LMG 26770 / FZB42) (Bacillus amyloliquefaciens subsp. plantarum), this protein is UPF0435 protein RBAM_008100.